A 427-amino-acid polypeptide reads, in one-letter code: GTPase Obg (427 aa).

One can recognise an Obg domain in the interval 1–158 (MFVDIAKIYV…LWVILELKVL (158 aa)). One can recognise an OBG-type G domain in the interval 159–330 (ADVGLIGYPN…VLKRAYELLK (172 aa)). GTP-binding positions include 165–172 (GYPNVGKS), 190–194 (FTTKY), 212–215 (DIPG), 282–285 (NKMD), and 311–313 (SAA). The Mg(2+) site is built by serine 172 and threonine 192. The OCT domain maps to 347-427 (FVYYKKKDVK…ILDVEFEYYE (81 aa)).

This sequence belongs to the TRAFAC class OBG-HflX-like GTPase superfamily. OBG GTPase family. Monomer. Mg(2+) is required as a cofactor.

The protein localises to the cytoplasm. Functionally, an essential GTPase which binds GTP, GDP and possibly (p)ppGpp with moderate affinity, with high nucleotide exchange rates and a fairly low GTP hydrolysis rate. Plays a role in control of the cell cycle, stress response, ribosome biogenesis and in those bacteria that undergo differentiation, in morphogenesis control. The protein is GTPase Obg of Caldicellulosiruptor saccharolyticus (strain ATCC 43494 / DSM 8903 / Tp8T 6331).